We begin with the raw amino-acid sequence, 327 residues long: Vacuolar protein sorting-associated protein 26A (327 aa).

The tract at residues 306–327 (RTNFHQRFESPESQASAEQPEM) is disordered. Ser315 bears the Phosphoserine mark. Polar residues predominate over residues 316–327 (PESQASAEQPEM).

The protein belongs to the VPS26 family. Component of the heterotrimeric retromer cargo-selective complex (CSC), also described as vacuolar protein sorting subcomplex (VPS), formed by VPS26 (VPS26A or VPS26B), VPS29 and VPS35. The CSC has a highly elongated structure with VPS26 and VPS29 binding independently at opposite distal ends of VPS35 as central platform. The CSC is believed to associate with variable sorting nexins to form functionally distinct retromer complex variants. The originally described retromer complex (also called SNX-BAR retromer) is a pentamer containing the CSC and a heterodimeric membrane-deforming subcomplex formed between SNX1 or SNX2 and SNX5 or SNX6 (also called SNX-BAR subcomplex); the respective CSC and SNX-BAR subcomplexes associate with low affinity. The CSC associates with SNX3 to form a SNX3-retromer complex. The CSC associates with SNX27, the WASH complex and the SNX-BAR subcomplex to form the SNX27-retromer complex. Interacts with VPS29, VPS35, SNX1, SNX2, SNX5, SNX6, SNX3, SNX27, RAB7A, ECPAS, EHD1, WASHC5, SORL1.

It is found in the cytoplasm. Its subcellular location is the endosome membrane. The protein localises to the early endosome. Functionally, acts as a component of the retromer cargo-selective complex (CSC). The CSC is believed to be the core functional component of retromer or respective retromer complex variants acting to prevent missorting of selected transmembrane cargo proteins into the lysosomal degradation pathway. The recruitment of the CSC to the endosomal membrane involves RAB7A and SNX3. The SNX-BAR retromer mediates retrograde transport of cargo proteins from endosomes to the trans-Golgi network (TGN) and is involved in endosome-to-plasma membrane transport for cargo protein recycling. The SNX3-retromer mediates the retrograde endosome-to-TGN transport of WLS distinct from the SNX-BAR retromer pathway. The SNX27-retromer is believed to be involved in endosome-to-plasma membrane trafficking and recycling of a broad spectrum of cargo proteins. The CSC seems to act as recruitment hub for other proteins, such as the WASH complex and TBC1D5. Required for retrograde transport of lysosomal enzyme receptor IGF2R. Required to regulate transcytosis of the polymeric immunoglobulin receptor (pIgR-pIgA). Required for the endosomal localization of WASHC2A (indicative for the WASH complex). Required for the endosomal localization of TBC1D5. Mediates retromer cargo recognition of SORL1 and is involved in trafficking of SORL1 implicated in sorting and processing of APP. Involved in retromer-independent lysosomal sorting of F2R. Involved in recycling of ADRB2. Enhances the affinity of SNX27 for PDZ-binding motifs in cargo proteins. This chain is Vacuolar protein sorting-associated protein 26A, found in Homo sapiens (Human).